We begin with the raw amino-acid sequence, 459 residues long: tRNA modification GTPase MnmE (459 aa).

3 residues coordinate (6S)-5-formyl-5,6,7,8-tetrahydrofolate: arginine 24, glutamate 82, and lysine 122. The region spanning 219–379 (GIKVVISGAP…LRQHLYFSFK (161 aa)) is the TrmE-type G domain. GTP contacts are provided by residues 229-234 (NSGKSS), 248-254 (TNFPGTT), and 273-276 (DTAG). Residues serine 233 and threonine 254 each contribute to the Mg(2+) site. Lysine 459 is a binding site for (6S)-5-formyl-5,6,7,8-tetrahydrofolate.

This sequence belongs to the TRAFAC class TrmE-Era-EngA-EngB-Septin-like GTPase superfamily. TrmE GTPase family. As to quaternary structure, homodimer. Heterotetramer of two MnmE and two MnmG subunits. K(+) is required as a cofactor.

It is found in the cytoplasm. Exhibits a very high intrinsic GTPase hydrolysis rate. Involved in the addition of a carboxymethylaminomethyl (cmnm) group at the wobble position (U34) of certain tRNAs, forming tRNA-cmnm(5)s(2)U34. This is tRNA modification GTPase MnmE from Buchnera aphidicola subsp. Baizongia pistaciae (strain Bp).